A 368-amino-acid chain; its full sequence is MVVLGSTGSIGKNALKIAKKFGVEIEALSCGKNIALINEQIKVFKPKKVAILDPNDLNDLEPLGAKVFVGLEGIDAMIEECVSNLVLNAIVGVAGLKASFKSLQRNKKLALANKESLVSAGHLLDISQITPVDSEHFGLWALLQNKTLKPKSLIISASGGAFRDTPLELIAIQNAQNALKHPNWSMGSKITIDSASMVNKLFEILETYWLFGASLKIDALIERSSIVHALVEFEDNSIIAHLASADMQLPISYAIDPKLASLNASIKPLDLYALSAIKFEPISMERYTLWRYKDLLLENPKLGVVLNASNEVAIEKFLDKEIAFGGLIQTISQALELYAKMPFKLSSLDEVLALDREVRERFKNVARV.

Thr-7, Gly-8, Ser-9, Ile-10, Gly-31, Lys-32, Asn-33, and Asn-113 together coordinate NADPH. Residue Lys-114 participates in 1-deoxy-D-xylulose 5-phosphate binding. Residue Glu-115 coordinates NADPH. Asp-133 contacts Mn(2+). 1-deoxy-D-xylulose 5-phosphate is bound by residues Ser-134, Glu-135, Ser-158, and His-181. Glu-135 contacts Mn(2+). Gly-187 lines the NADPH pocket. 1-deoxy-D-xylulose 5-phosphate-binding residues include Ser-194, Asn-199, Lys-200, and Glu-203. Glu-203 provides a ligand contact to Mn(2+).

This sequence belongs to the DXR family. Mg(2+) serves as cofactor. Requires Mn(2+) as cofactor.

It catalyses the reaction 2-C-methyl-D-erythritol 4-phosphate + NADP(+) = 1-deoxy-D-xylulose 5-phosphate + NADPH + H(+). It participates in isoprenoid biosynthesis; isopentenyl diphosphate biosynthesis via DXP pathway; isopentenyl diphosphate from 1-deoxy-D-xylulose 5-phosphate: step 1/6. Functionally, catalyzes the NADPH-dependent rearrangement and reduction of 1-deoxy-D-xylulose-5-phosphate (DXP) to 2-C-methyl-D-erythritol 4-phosphate (MEP). This chain is 1-deoxy-D-xylulose 5-phosphate reductoisomerase, found in Helicobacter pylori (strain P12).